The chain runs to 443 residues: 3-phosphoshikimate 1-carboxyvinyltransferase (443 aa).

Positions 1 to 25 (MSHSAEPLPMTARRSGPLTGEAQVP) are disordered. The 3-phosphoshikimate site is built by Lys-28, Ser-29, and Arg-33. Residue Lys-28 coordinates phosphoenolpyruvate. Residues Gly-101 and Arg-129 each contribute to the phosphoenolpyruvate site. 3-phosphoshikimate is bound by residues Ser-174, Gln-176, Asp-326, and Lys-353. Gln-176 contributes to the phosphoenolpyruvate binding site. Asp-326 functions as the Proton acceptor in the catalytic mechanism. The phosphoenolpyruvate site is built by Arg-357 and Arg-400.

The protein belongs to the EPSP synthase family. As to quaternary structure, monomer.

It localises to the cytoplasm. The catalysed reaction is 3-phosphoshikimate + phosphoenolpyruvate = 5-O-(1-carboxyvinyl)-3-phosphoshikimate + phosphate. It functions in the pathway metabolic intermediate biosynthesis; chorismate biosynthesis; chorismate from D-erythrose 4-phosphate and phosphoenolpyruvate: step 6/7. Its function is as follows. Catalyzes the transfer of the enolpyruvyl moiety of phosphoenolpyruvate (PEP) to the 5-hydroxyl of shikimate-3-phosphate (S3P) to produce enolpyruvyl shikimate-3-phosphate and inorganic phosphate. The chain is 3-phosphoshikimate 1-carboxyvinyltransferase from Paracoccus denitrificans (strain Pd 1222).